A 60-amino-acid chain; its full sequence is MAKGKENRIVITLECTEAKKEGKTVSRYTTTKNKKNTTDRLVLKKYNPSMQKHTLHKEIK.

This sequence belongs to the bacterial ribosomal protein bL33 family.

This chain is Large ribosomal subunit protein bL33, found in Chlorobium phaeovibrioides (strain DSM 265 / 1930) (Prosthecochloris vibrioformis (strain DSM 265)).